Consider the following 276-residue polypeptide: Monoglyceride lipase homolog (276 aa).

It belongs to the orthopoxvirus OPG043 family.

In Cynomys gunnisoni (Gunnison's prairie dog), this protein is Monoglyceride lipase homolog (OPG043).